Consider the following 469-residue polypeptide: Glutamate--tRNA ligase (469 aa).

Residues 11 to 21 (PSPTGFIHLGN) carry the 'HIGH' region motif. Over residues 116-131 (ASGEKPRYDGTWRPEP) the composition is skewed to basic and acidic residues. Residues 116-139 (ASGEKPRYDGTWRPEPGKVLPTPP) form a disordered region. The 'KMSKS' region motif lies at 243–247 (KMSKR). K246 contributes to the ATP binding site.

This sequence belongs to the class-I aminoacyl-tRNA synthetase family. Glutamate--tRNA ligase type 1 subfamily. In terms of assembly, monomer.

The protein localises to the cytoplasm. The enzyme catalyses tRNA(Glu) + L-glutamate + ATP = L-glutamyl-tRNA(Glu) + AMP + diphosphate. Catalyzes the attachment of glutamate to tRNA(Glu) in a two-step reaction: glutamate is first activated by ATP to form Glu-AMP and then transferred to the acceptor end of tRNA(Glu). This Paraburkholderia phymatum (strain DSM 17167 / CIP 108236 / LMG 21445 / STM815) (Burkholderia phymatum) protein is Glutamate--tRNA ligase.